The sequence spans 469 residues: Argininosuccinate lyase (469 aa).

It belongs to the lyase 1 family. Argininosuccinate lyase subfamily.

Its subcellular location is the cytoplasm. It catalyses the reaction 2-(N(omega)-L-arginino)succinate = fumarate + L-arginine. The protein operates within amino-acid biosynthesis; L-arginine biosynthesis; L-arginine from L-ornithine and carbamoyl phosphate: step 3/3. The polypeptide is Argininosuccinate lyase (Burkholderia orbicola (strain MC0-3)).